The primary structure comprises 147 residues: Protein phosphatase 1 regulatory subunit 14A (147 aa).

Over residues 1 to 11 the composition is skewed to basic residues; the sequence is MAAQRLGKRVL. The segment at 1 to 36 is disordered; sequence MAAQRLGKRVLSKLQSPSRARGPGGSPSGLQKRHAR. Ser26 is modified (phosphoserine). The segment at 35–120 is inhibitory; it reads ARVTVKYDRR…LLAKLRGLHK (86 aa). Thr38 is subject to Phosphothreonine; by PKC. Residues 118–147 are disordered; sequence LHKQPGFPQPSPSDDPSLSPRQDRAHTAPP. Phosphoserine occurs at positions 128, 134, and 136. The segment covering 138–147 has biased composition (basic and acidic residues); it reads RQDRAHTAPP.

It belongs to the PP1 inhibitor family.

It is found in the cytoplasm. Inhibitor of PPP1CA. Has over 1000-fold higher inhibitory activity when phosphorylated, creating a molecular switch for regulating the phosphorylation status of PPP1CA substrates and smooth muscle contraction. This is Protein phosphatase 1 regulatory subunit 14A (Ppp1r14a) from Mus musculus (Mouse).